A 640-amino-acid chain; its full sequence is RNA polymerase II elongation factor ELL2 (640 aa).

Disordered regions lie at residues A172–S202, K290–R320, and R343–L490. Composition is skewed to polar residues over residues T184–S202 and L291–Q318. Over residues A360–I372 the composition is skewed to low complexity. Over residues I391 to T401 the composition is skewed to polar residues. Positions M457–K470 are enriched in basic residues. The segment covering E471–L490 has biased composition (basic and acidic residues). S503 and S580 each carry phosphoserine. An OCEL domain is found at P526–A636.

Belongs to the ELL/occludin family. As to quaternary structure, component of the super elongation complex (SEC), at least composed of EAF1, EAF2, CDK9, MLLT3/AF9, AFF (AFF1 or AFF4), the P-TEFb complex and ELL (ELL, ELL2 or ELL3). Component of the little elongation complex (LEC), at least composed of ELL (ELL, ELL2 or ELL3), ZC3H8, ICE1 and ICE2. Interacts with AFF4; the interaction is direct and leads to stabilize ELL2 and prevent ELL2 ubiquitination. Interacts with EAF1 and EAF2. Post-translationally, ubiquitinated by SIAH1, leading to its degradation by the proteasome. Interaction with AFF4 stabilizes ELL2 and prevents ELL2 ubiquitination.

The protein localises to the nucleus. Elongation factor component of the super elongation complex (SEC), a complex required to increase the catalytic rate of RNA polymerase II transcription by suppressing transient pausing by the polymerase at multiple sites along the DNA. Component of the little elongation complex (LEC), a complex required to regulate small nuclear RNA (snRNA) gene transcription by RNA polymerase II and III. Plays a role in immunoglobulin secretion in plasma cells: directs efficient alternative mRNA processing, influencing both proximal poly(A) site choice and exon skipping, as well as immunoglobulin heavy chain (IgH) alternative processing. Probably acts by regulating histone modifications accompanying transition from membrane-specific to secretory IgH mRNA expression. The polypeptide is RNA polymerase II elongation factor ELL2 (ELL2) (Homo sapiens (Human)).